The primary structure comprises 284 residues: Diaminopimelate epimerase (284 aa).

Residues Asn-20, Gln-53, and Asn-73 each contribute to the substrate site. Residue Cys-82 is the Proton donor of the active site. Residues 83 to 84, Asn-167, Asn-200, and 218 to 219 contribute to the substrate site; these read GN and ER. The active-site Proton acceptor is Cys-227. 228–229 lines the substrate pocket; that stretch reads GS.

It belongs to the diaminopimelate epimerase family. Homodimer.

The protein localises to the cytoplasm. It carries out the reaction (2S,6S)-2,6-diaminopimelate = meso-2,6-diaminopimelate. It functions in the pathway amino-acid biosynthesis; L-lysine biosynthesis via DAP pathway; DL-2,6-diaminopimelate from LL-2,6-diaminopimelate: step 1/1. In terms of biological role, catalyzes the stereoinversion of LL-2,6-diaminopimelate (L,L-DAP) to meso-diaminopimelate (meso-DAP), a precursor of L-lysine and an essential component of the bacterial peptidoglycan. The chain is Diaminopimelate epimerase from Xanthomonas euvesicatoria pv. vesicatoria (strain 85-10) (Xanthomonas campestris pv. vesicatoria).